Here is a 227-residue protein sequence, read N- to C-terminus: Urease accessory protein UreF (227 aa).

It belongs to the UreF family. UreD, UreF and UreG form a complex that acts as a GTP-hydrolysis-dependent molecular chaperone, activating the urease apoprotein by helping to assemble the nickel containing metallocenter of UreC. The UreE protein probably delivers the nickel.

It localises to the cytoplasm. Functionally, required for maturation of urease via the functional incorporation of the urease nickel metallocenter. The chain is Urease accessory protein UreF from Actinobacillus pleuropneumoniae serotype 3 (strain JL03).